Here is a 229-residue protein sequence, read N- to C-terminus: Trehalose-6-phosphate phosphatase-related protein (229 aa).

The active-site Nucleophile is aspartate 5. Mg(2+) contacts are provided by aspartate 5, aspartate 7, and aspartate 177. 5-7 (DYD) contributes to the substrate binding site.

It belongs to the trehalose phosphatase family. Requires Mg(2+) as cofactor.

It catalyses the reaction alpha,alpha-trehalose 6-phosphate + H2O = alpha,alpha-trehalose + phosphate. It functions in the pathway glycan biosynthesis; trehalose biosynthesis. Removes the phosphate from trehalose 6-phosphate (Tre6P) to produce free trehalose. Also catalyzes the dephosphorylation of para-nitrophenyl phosphate (pNPP), but with lesser efficiency (in vitro). The sequence is that of Trehalose-6-phosphate phosphatase-related protein from Thermoplasma acidophilum (strain ATCC 25905 / DSM 1728 / JCM 9062 / NBRC 15155 / AMRC-C165).